Here is an 815-residue protein sequence, read N- to C-terminus: Leucine--tRNA ligase (815 aa).

The 'HIGH' region motif lies at 40–50 (PYPSGRIHMGH). The 'KMSKS' region motif lies at 583–587 (KMSKS). Position 586 (Lys-586) interacts with ATP.

This sequence belongs to the class-I aminoacyl-tRNA synthetase family.

It is found in the cytoplasm. It catalyses the reaction tRNA(Leu) + L-leucine + ATP = L-leucyl-tRNA(Leu) + AMP + diphosphate. The chain is Leucine--tRNA ligase from Nitratiruptor sp. (strain SB155-2).